The chain runs to 123 residues: MPTINQLIRIGRESKKDKSTAPALKCCPQKRGVCTRVYTTTPKKPNSALRKVARVRLTNGIEVTSYIPGVGHNLQEHSVVLIRGGRVKDLPGVRYHIVRGTLDSVGVKDRKKSRSKYGAKRPK.

Asp-89 is subject to 3-methylthioaspartic acid. The tract at residues 104 to 123 (SVGVKDRKKSRSKYGAKRPK) is disordered. Positions 109-123 (DRKKSRSKYGAKRPK) are enriched in basic residues.

It belongs to the universal ribosomal protein uS12 family. As to quaternary structure, part of the 30S ribosomal subunit. Contacts proteins S8 and S17. May interact with IF1 in the 30S initiation complex.

Its function is as follows. With S4 and S5 plays an important role in translational accuracy. Interacts with and stabilizes bases of the 16S rRNA that are involved in tRNA selection in the A site and with the mRNA backbone. Located at the interface of the 30S and 50S subunits, it traverses the body of the 30S subunit contacting proteins on the other side and probably holding the rRNA structure together. The combined cluster of proteins S8, S12 and S17 appears to hold together the shoulder and platform of the 30S subunit. The sequence is that of Small ribosomal subunit protein uS12 from Geotalea daltonii (strain DSM 22248 / JCM 15807 / FRC-32) (Geobacter daltonii).